Reading from the N-terminus, the 429-residue chain is L-dopachrome tautomerase yellow-f (429 aa).

Residues 1-23 form the signal peptide; sequence MLSLDVLLLCAISGFQLLISADG. Residues Asn-133 and Asn-372 are each glycosylated (N-linked (GlcNAc...) asparagine).

It belongs to the major royal jelly protein family.

It is found in the secreted. The catalysed reaction is L-dopachrome = 5,6-dihydroxyindole-2-carboxylate. It functions in the pathway pigment biosynthesis; melanin biosynthesis. Tautomerization of L-dopachrome with decarboxylation to give 5,6-dihydroxyindole (DHI). Also catalyzes the tautomerization of the methyl ester of L-dopachrome and dopamine chrome. May play a role in melanization reactions during late pupal and adult stages. May play a role in melanization reactions during larval and early pupal stages. The sequence is that of L-dopachrome tautomerase yellow-f from Drosophila melanogaster (Fruit fly).